We begin with the raw amino-acid sequence, 250 residues long: Acyl-coenzyme A diphosphatase fit1 (250 aa).

Over 1 to 23 (MTEKTASHYWNEETSILKLRRKD) the chain is Cytoplasmic. Residues 24-44 (ILLFEIYATTLLLGSIYSIYV) form a helical membrane-spanning segment. Topologically, residues 45-58 (DKWSITSYFGNSKN) are lumenal. The helical transmembrane segment at 59 to 79 (LINLIFVKRGWFWTSLVYFYH) threads the bilayer. Topologically, residues 80–95 (AWDQKRNKIDFKFISR) are cytoplasmic. Residues 96-116 (YIVATLWWMFVTQWFIGPGLI) form a helical membrane-spanning segment. Over 117–160 (DRTFALSGGSCKNFDGDSSVFIPLTASTCKGLNGSWSGGHDLSG) the chain is Lumenal. N-linked (GlcNAc...) asparagine glycosylation occurs at Asn-149. His-161 is a catalytic residue. Residues 161–181 (HVFLLTHSSLFMLSENFSFIL) traverse the membrane as a helical segment. Topologically, residues 182–191 (NNGIKATSTK) are cytoplasmic. A helical membrane pass occupies residues 192-212 (VLFGLLGLWWWMLFVTASFYH). His-212 is an active-site residue. Position 213 (Thr-213) is a topological domain, lumenal. Residues 214–234 (TFEKCTGFFSGILEWSIVYVF) form a helical membrane-spanning segment. At 235-250 (SSRMPAVADLLGSSDY) the chain is on the cytoplasmic side.

This sequence belongs to the FIT family. Fungal FIT2B/SCS3 subfamily.

Its subcellular location is the endoplasmic reticulum membrane. It carries out the reaction an acyl-CoA + H2O = an acyl-4'-phosphopantetheine + adenosine 3',5'-bisphosphate + 2 H(+). It catalyses the reaction (9Z)-octadecenoyl-CoA + H2O = S-(9Z-octadecenoyl)-4'-phosphopantetheine + adenosine 3',5'-bisphosphate + 2 H(+). The catalysed reaction is (5Z,8Z,11Z,14Z)-eicosatetraenoyl-CoA + H2O = S-(5Z,8Z,11Z,14Z-eicosatetraenoyl)-4'-phosphopantetheine + adenosine 3',5'-bisphosphate + 2 H(+). The enzyme catalyses hexadecanoyl-CoA + H2O = S-hexadecanoyl-4'-phosphopantetheine + adenosine 3',5'-bisphosphate + 2 H(+). In terms of biological role, fatty acyl-coenzyme A (CoA) diphosphatase that hydrolyzes fatty acyl-CoA to yield acyl-4'-phosphopantetheine and adenosine 3',5'-bisphosphate. Preferentially hydrolyzes unsaturated long-chain acyl-CoA substrates in the endoplasmic reticulum (ER) lumen. This catalytic activity is required for maintaining ER structure and for lipid droplets (LDs) biogenesis, which are lipid storage organelles involved in maintaining lipid and energy homeostasis. May directly bind to diacylglycerol (DAGs) and triacylglycerol, which is also important for LD biogenesis. May support directional budding of nacent LDs from the ER into the cytosol by reducing DAG levels at sites of LD formation. May play a role in the regulation of cell morphology and cytoskeletal organization. The protein is Acyl-coenzyme A diphosphatase fit1 of Schizosaccharomyces pombe (strain 972 / ATCC 24843) (Fission yeast).